The following is an 85-amino-acid chain: Toxin BmKaTx10 (85 aa).

The N-terminal stretch at 1-19 is a signal peptide; it reads MNYLVMVSFALLLMTGVES. Positions 21–83 constitute an LCN-type CS-alpha/beta domain; it reads RDGYIALPHN…VPIRVPGRCH (63 aa). Cystine bridges form between C31-C82, C35-C55, C41-C65, and C45-C67.

It belongs to the long (4 C-C) scorpion toxin superfamily. Sodium channel inhibitor family. Alpha subfamily. In terms of tissue distribution, expressed by the venom gland.

It localises to the secreted. Its function is as follows. Alpha toxins bind voltage-independently at site-3 of sodium channels (Nav) and inhibit the inactivation of the activated channels, thereby blocking neuronal transmission. In Olivierus martensii (Manchurian scorpion), this protein is Toxin BmKaTx10.